Here is a 212-residue protein sequence, read N- to C-terminus: Prolactin-3C1 (212 aa).

Residues 1–29 (MQLSLTQARTWKGLFLLVSCMFLWVYVTA) form the signal peptide. A disulfide bond links cysteine 80 and cysteine 188. Residue asparagine 100 is glycosylated (N-linked (GlcNAc...) asparagine).

It belongs to the somatotropin/prolactin family. As to expression, expressed exclusively in decidua.

It is found in the secreted. The polypeptide is Prolactin-3C1 (Prl3c1) (Mus musculus (Mouse)).